Reading from the N-terminus, the 145-residue chain is Late embryogenesis abundant protein D-11 (145 aa).

Polar residues predominate over residues 1 to 18; that stretch reads MAHFQNQYSAPEVTQTDA. A disordered region spans residues 1–136; the sequence is MAHFQNQYSA…EAPWSPQPLI (136 aa). Residues 47 to 57 show a composition bias toward basic residues; it reads GHHHGGHHGLH. The span at 58 to 68 shows a compositional bias: low complexity; that stretch reads RTGSSSSSSSS. A compositionally biased stretch (basic and acidic residues) spans 82 to 96; it reads KERLKEKIPGNKEHQ. A compositionally biased stretch (polar residues) spans 97–107; the sequence is SQATSTTTPGQ.

Belongs to the plant dehydrin family.

LEA protein are late embryogenesis abundant in higher plant seed embryos. There are two subsets of LEA proteins (5a, and 5b), the first ones are expressed when the cotyledon weight reach 80 mg and the second set are expressed above 100 mg. The function of those proteins is not known. In Gossypium hirsutum (Upland cotton), this protein is Late embryogenesis abundant protein D-11.